Consider the following 145-residue polypeptide: Bacilliredoxin GK2368 (145 aa).

This sequence belongs to the bacilliredoxin family.

The polypeptide is Bacilliredoxin GK2368 (Geobacillus kaustophilus (strain HTA426)).